A 178-amino-acid chain; its full sequence is Caveolin-1 (178 aa).

Ser-2 carries the N-acetylserine modification. Ser-2 bears the Phosphoserine mark. Residues 2–94 (SGGKYVDSEG…WKASFTTFTV (93 aa)) are required for homooligomerization. The Cytoplasmic portion of the chain corresponds to 2–104 (SGGKYVDSEG…TKYWFYRLLS (103 aa)). Position 5 is an N6-acetyllysine; alternate (Lys-5). Residue Lys-5 forms a Glycyl lysine isopeptide (Lys-Gly) (interchain with G-Cter in ubiquitin); alternate linkage. Tyr-6 carries the post-translational modification Phosphotyrosine. Phosphoserine is present on Ser-9. Phosphotyrosine; by ABL1 is present on Tyr-14. Residue Tyr-25 is modified to Phosphotyrosine. Glycyl lysine isopeptide (Lys-Gly) (interchain with G-Cter in ubiquitin) cross-links involve residues Lys-26, Lys-30, Lys-39, Lys-47, and Lys-57. The interval 82-94 (DGIWKASFTTFTV) is interaction with CAVIN3. Positions 105 to 125 (ALFGIPMALIWGIYFAILSFL) form an intramembrane region, helical. At 126–178 (HIWAVVPCIKSFLIEIQCVSRVYSIYVHTFCDPFFEAVGKIFSSIRINMQKEI) the chain is on the cytoplasmic side. Residues 131-142 (VPCIKSFLIEIQ) are interacts with SPRY1, SPRY2, SPRY3 and SPRY4. S-palmitoyl cysteine attachment occurs at residues Cys-133, Cys-143, and Cys-156. The tract at residues 149-160 (SIYVHTFCDPFF) is interacts with SPRY1, SPRY2, and SPRY4. The segment at 167–178 (FSSIRINMQKEI) is interacts with SPRY1, SPRY2, SPRY3 and SPRY4.

This sequence belongs to the caveolin family. In terms of assembly, homooligomer. Interacts with GLIPR2. Interacts with NOSTRIN. Interacts with SNAP25 and STX1A. Interacts (via the N-terminus) with DPP4; the interaction is direct. Interacts with CTNNB1, CDH1 and JUP. Interacts with PACSIN2; this interaction induces membrane tubulation. Interacts with SLC7A9. Interacts with BMX and BTK. Interacts with TGFBR1. Interacts with CAVIN3 (via leucine-zipper domain) in a cholesterol-sensitive manner. Interacts with CAVIN1. Interacts with EHD2 in a cholesterol-dependent manner. Forms a ternary complex with UBXN6 and VCP; mediates CAV1 targeting to lysosomes for degradation. Interacts with ABCG1; this interaction regulates ABCG1-mediated cholesterol efflux. Interacts with NEU3; this interaction enhances NEU3 sialidase activity within caveola. Interacts (via C-terminus) with SPRY1, SPRY2 (via C-terminus), SPRY3, and SPRY4. Interacts with IGFBP5; this interaction allows trafficking of IGFBP5 from the plasma membrane to the nucleus. In terms of processing, phosphorylated at Tyr-14 by ABL1 in response to oxidative stress. Ubiquitinated. Undergo monoubiquitination and multi- and/or polyubiquitination. Monoubiquitination of N-terminal lysines promotes integration in a ternary complex with UBXN6 and VCP which promotes oligomeric CAV1 targeting to lysosomes for degradation. Ubiquitinated by ZNRF1; leading to degradation and modulation of the TLR4-mediated immune response.

It is found in the golgi apparatus membrane. The protein resides in the cell membrane. Its subcellular location is the membrane. It localises to the caveola. The protein localises to the membrane raft. Its function is as follows. May act as a scaffolding protein within caveolar membranes. Forms a stable heterooligomeric complex with CAV2 that targets to lipid rafts and drives caveolae formation. Mediates the recruitment of CAVIN proteins (CAVIN1/2/3/4) to the caveolae. Interacts directly with G-protein alpha subunits and can functionally regulate their activity. Involved in the costimulatory signal essential for T-cell receptor (TCR)-mediated T-cell activation. Its binding to DPP4 induces T-cell proliferation and NF-kappa-B activation in a T-cell receptor/CD3-dependent manner. Recruits CTNNB1 to caveolar membranes and may regulate CTNNB1-mediated signaling through the Wnt pathway. Negatively regulates TGFB1-mediated activation of SMAD2/3 by mediating the internalization of TGFBR1 from membrane rafts leading to its subsequent degradation. Binds 20(S)-hydroxycholesterol (20(S)-OHC). In Mustela putorius furo (European domestic ferret), this protein is Caveolin-1 (CAV1).